The following is a 218-amino-acid chain: Calcineurin B-like protein 5 (218 aa).

EF-hand domains are found at residues 35–69 (EVEA…FRNK), 70–105 (KTNL…FHPD), 107–142 (PEEQ…LLDE), and 151–186 (AVEM…NPYV).

This sequence belongs to the calcineurin regulatory subunit family. As to quaternary structure, homodimer. In terms of tissue distribution, expressed at low levels in roots, shoots, culms, leaves and young spikelets.

Acts as a calcium sensor. CBL proteins interact with CIPK serine-threonine protein kinases. Binding of a CBL protein to the regulatory NAF domain of a CIPK protein lead to the activation of the kinase in a calcium-dependent manner. The polypeptide is Calcineurin B-like protein 5 (CBL5) (Oryza sativa subsp. japonica (Rice)).